We begin with the raw amino-acid sequence, 217 residues long: MGLRIKICGLRDPQQAIAIADLGATAIGFIAVRQSPRYVSPAQVAEIAQALQKTHPTVNRVGVFANATAEELEAYVAAGITSLQLHGDETLADCQRWRDRFPALELIKALRIRSTADLALAESFTDCVDTLLLDAYHPQMLGGTGATLDWQALQAFQPSRPWLLAGGLTPENITTALSQLHPAGIDLSSGVERSPGDKDLEKVTALFSSLARNSLLK.

The protein belongs to the TrpF family.

The catalysed reaction is N-(5-phospho-beta-D-ribosyl)anthranilate = 1-(2-carboxyphenylamino)-1-deoxy-D-ribulose 5-phosphate. It participates in amino-acid biosynthesis; L-tryptophan biosynthesis; L-tryptophan from chorismate: step 3/5. The chain is N-(5'-phosphoribosyl)anthranilate isomerase from Synechococcus elongatus (strain ATCC 33912 / PCC 7942 / FACHB-805) (Anacystis nidulans R2).